Consider the following 1585-residue polypeptide: uncharacterized protein (1585 aa).

Positions 12–59 (DKISRKLRMIQGNAERLKRAANGPLIFEAEDRTERVMRQIDRSANRLT) form a coiled coil. Disordered stretches follow at residues 586 to 627 (PKRT…SLPR) and 645 to 692 (IRRR…NPTR). The span at 618–627 (TATGPTSLPR) shows a compositional bias: polar residues. A compositionally biased stretch (basic residues) spans 645–655 (IRRRRGKRVLG). Residues 661–672 (NRMNPSDSSIAV) show a composition bias toward polar residues. 2 positions are modified to phosphoserine: serine 970 and serine 972.

It to B.subtilis XkdO.

This is an uncharacterized protein from Bacillus subtilis (strain 168).